A 711-amino-acid polypeptide reads, in one-letter code: Long-chain-fatty-acid--CoA ligase 4 (711 aa).

The chain crosses the membrane as a helical; Signal-anchor for type III membrane protein span at residues 8-28 (LTIILLPVHLLITIYSALIFI). Topologically, residues 29–711 (PWYFLTNAKK…KDIERMYGGK (683 aa)) are cytoplasmic. At Ser447 the chain carries Phosphoserine.

It belongs to the ATP-dependent AMP-binding enzyme family. Requires Mg(2+) as cofactor.

The protein localises to the mitochondrion outer membrane. It is found in the peroxisome membrane. The protein resides in the microsome membrane. Its subcellular location is the endoplasmic reticulum membrane. It localises to the cell membrane. It catalyses the reaction a long-chain fatty acid + ATP + CoA = a long-chain fatty acyl-CoA + AMP + diphosphate. It carries out the reaction (5Z,8Z,11Z,14Z)-eicosatetraenoate + ATP + CoA = (5Z,8Z,11Z,14Z)-eicosatetraenoyl-CoA + AMP + diphosphate. The enzyme catalyses hexadecanoate + ATP + CoA = hexadecanoyl-CoA + AMP + diphosphate. The catalysed reaction is (E)-hexadec-2-enoate + ATP + CoA = (2E)-hexadecenoyl-CoA + AMP + diphosphate. It catalyses the reaction 15-hydroxy-(5Z,8Z,11Z,13E)-eicosatetraenoate + ATP + CoA = 15-hydroxy-(5Z,8Z,11Z,13E)-eicosatetraenoyl-CoA + AMP + diphosphate. It carries out the reaction 12-hydroxy-(5Z,8Z,10E,14Z)-eicosatetraenoate + ATP + CoA = 12-hydroxy-(5Z,8Z,10E,14Z)-eicosatetraenoyl-CoA + AMP + diphosphate. The enzyme catalyses 5-hydroxy-(6E,8Z,11Z,14Z)-eicosatetraenoate + ATP + CoA = 5-hydroxy-(6E,8Z,11Z,14Z)-eicosatetraenoyl-CoA + AMP + diphosphate. The catalysed reaction is 5,6-epoxy-(8Z,11Z,14Z)-eicosatrienoate + ATP + CoA = 5,6-epoxy-(8Z,11Z,14Z)-eicosatrienoyl-CoA + AMP + diphosphate. It catalyses the reaction 14,15-epoxy-(5Z,8Z,11Z)-eicosatrienoate + ATP + CoA = 14,15-epoxy-(5Z,8Z,11Z)-eicosatrienoyl-CoA + AMP + diphosphate. It carries out the reaction 11,12-epoxy-(5Z,8Z,14Z)-eicosatrienoate + ATP + CoA = 11,12-epoxy-(5Z,8Z,14Z)-eicosatrienoyl-CoA + AMP + diphosphate. The enzyme catalyses 8,9-epoxy-(5Z,11Z,14Z)-eicosatrienoate + ATP + CoA = 8,9-epoxy-(5Z,11Z,14Z)-eicosatrienoyl-CoA + AMP + diphosphate. Both triacsin C and rosiglitazone inhibit arachidonoyl-CoA ligase activity. Functionally, catalyzes the conversion of long-chain fatty acids to their active form acyl-CoA for both synthesis of cellular lipids, and degradation via beta-oxidation. Preferentially activates arachidonate and eicosapentaenoate as substrates. Preferentially activates 8,9-EET &gt; 14,15-EET &gt; 5,6-EET &gt; 11,12-EET. Modulates glucose-stimulated insulin secretion by regulating the levels of unesterified EETs. Modulates prostaglandin E2 secretion. The protein is Long-chain-fatty-acid--CoA ligase 4 (ACSL4) of Homo sapiens (Human).